Reading from the N-terminus, the 364-residue chain is Caffeic acid 3-O-methyltransferase 3 (364 aa).

129–135 (MNQDKVL) is a substrate binding site. Positions 161 to 179 (AFEYHGTDPRFNKVFNKGM) are substrate binding. The S-adenosyl-L-methionine site is built by glycine 207, aspartate 230, aspartate 250, methionine 251, and lysine 264. Histidine 268 functions as the Proton acceptor in the catalytic mechanism.

The protein belongs to the class I-like SAM-binding methyltransferase superfamily. Cation-independent O-methyltransferase family. COMT subfamily. As to quaternary structure, homodimer.

It carries out the reaction (E)-caffeate + S-adenosyl-L-methionine = (E)-ferulate + S-adenosyl-L-homocysteine + H(+). Its pathway is aromatic compound metabolism; phenylpropanoid biosynthesis. Its function is as follows. Catalyzes the conversion of caffeic acid to ferulic acid and of 5-hydroxyferulic acid to sinapic acid. The resulting products may subsequently be converted to the corresponding alcohols that are incorporated into lignins. This Populus kitakamiensis (Aspen) protein is Caffeic acid 3-O-methyltransferase 3 (HOMT3).